Reading from the N-terminus, the 427-residue chain is Isocitrate lyase (427 aa).

89–91 (SGW) serves as a coordination point for substrate. Aspartate 150 is a Mg(2+) binding site. The active-site Proton acceptor is the cysteine 188. Residues 189–190 (GH), arginine 225, 310–314 (NCSPS), and threonine 344 each bind substrate.

This sequence belongs to the isocitrate lyase/PEP mutase superfamily. Isocitrate lyase family. In terms of assembly, homotetramer. Mg(2+) serves as cofactor.

The catalysed reaction is D-threo-isocitrate = glyoxylate + succinate. Its pathway is carbohydrate metabolism; glyoxylate cycle; (S)-malate from isocitrate: step 1/2. Involved in the metabolic adaptation in response to environmental changes. Catalyzes the reversible formation of succinate and glyoxylate from isocitrate, a key step of the glyoxylate cycle, which operates as an anaplerotic route for replenishing the tricarboxylic acid cycle during growth on fatty acid substrates. In Halalkalibacterium halodurans (strain ATCC BAA-125 / DSM 18197 / FERM 7344 / JCM 9153 / C-125) (Bacillus halodurans), this protein is Isocitrate lyase (aceA).